Reading from the N-terminus, the 348-residue chain is Centromere protein N-A (348 aa).

The protein belongs to the CENP-N/CHL4 family.

It is found in the nucleus. Its subcellular location is the chromosome. The protein resides in the centromere. Probable component of a centromeric complex involved in assembly of kinetochore proteins, mitotic progression and chromosome segregation. The chain is Centromere protein N-A (cenpn-a) from Xenopus laevis (African clawed frog).